Consider the following 764-residue polypeptide: MSTKKQNIQAELVDPDAGVWEVEATIDNGDFGTRSIRFETGLLARQADGAVTAYLDEDTMLLSTTAASRQPREGIDFFPLTVDVEERMYSVGRIPGSFFRREGRPGTDAILAARLIDRPLRPTFVRGLRNEVQVIVTVLSMDPKDRYDVLAINGASASTQLSGLPVSGPVGGVRMALVVDSDHPEGQWVAFPTREQEEKAIFELVVAGRVTEPVKPARGRGRGRGKGAGSSEPNVAVMMVEAGATDNVVERIAEGAPAPTEEVVAQGIEAAKPFIATLCEAQNALAKAVDAETREFELFPPYGEDVFASVQAEALDALEDIMAIADKQERDEALAANMQANVDELLPEFPEREAEIRAAHNEVTKAVVRRRILEDGFRIDGRDSTTIRDLGIVVQLIPRAHGSALFERGETQILGVTTLDMLKMEQQIDSLGPETSKRYIHHYNFPPYSTGETGRVGSPKRREIGHGALAERALTPVIPSRDDFPYTIRQVSEALSSNGSTSMGSVCASTLSLYNAGVPLKAPVAGIAMGLVTGKVGKAGKDKYVTLTDILGAEDAFGDMDFKVAGTPDFVTALQLDTKLDGIPSDVLAEALQQARTARLEILQLMEEAIDSPDDMSDLAPHITSINIPQNKIGEVIGPKGKTINQITEETGANITIEDDGTVFISAVGGESAREAEEKINAIANPQQPKVGDRFLGTVVKTTAFGAFVSLLPGRDGLIHISNLGGDRRIERVEDEVSVGDKLEVEIADIDNRGKISLVLVEEN.

Positions 555 and 561 each coordinate Mg(2+). The 60-residue stretch at 621 to 680 folds into the KH domain; it reads PHITSINIPQNKIGEVIGPKGKTINQITEETGANITIEDDGTVFISAVGGESAREAEEKI. Residues 692 to 761 form the S1 motif domain; sequence GDRFLGTVVK…NRGKISLVLV (70 aa).

Belongs to the polyribonucleotide nucleotidyltransferase family. Mg(2+) is required as a cofactor.

It is found in the cytoplasm. It catalyses the reaction RNA(n+1) + phosphate = RNA(n) + a ribonucleoside 5'-diphosphate. Functionally, involved in mRNA degradation. Catalyzes the phosphorolysis of single-stranded polyribonucleotides processively in the 3'- to 5'-direction. In Corynebacterium jeikeium (strain K411), this protein is Polyribonucleotide nucleotidyltransferase.